A 42-amino-acid polypeptide reads, in one-letter code: Potassium channel gamma toxin gamma-KTx 1.9 (42 aa).

Intrachain disulfides connect cysteine 5–cysteine 23, cysteine 11–cysteine 34, cysteine 20–cysteine 39, and cysteine 24–cysteine 41.

The protein belongs to the ergtoxin family. Gamma-KTx 1 subfamily. As to expression, expressed by the venom gland.

The protein resides in the secreted. Blocks human voltage-gated potassium channel Kv11.1/KCNH2/ERG1 (IC(50)=16.9 nM). This Centruroides tecomanus (Scorpion) protein is Potassium channel gamma toxin gamma-KTx 1.9.